We begin with the raw amino-acid sequence, 554 residues long: GPI transamidase component PIG-S homolog (554 aa).

At 1 to 73 (MSPCKWLTMF…LNKPEKSLKR (73 aa)) the chain is on the cytoplasmic side. The chain crosses the membrane as a helical span at residues 74 to 94 (YALLSFYVIILLAIPVWWKTT). Residues 95–511 (HYERSSLPFE…VTTIYFPDES (417 aa)) are Lumenal-facing. Asn-132 and Asn-375 each carry an N-linked (GlcNAc...) asparagine glycan. A helical membrane pass occupies residues 512–532 (KYGIYAPLFAPILIPLLISFI). Residues 533–554 (KEVKDMLRERKLHRVANVPKPN) lie on the Cytoplasmic side of the membrane.

This sequence belongs to the PIGS family. In terms of assembly, forms a complex with PIG-T homolog, PIG-U homolog and GPI8.

The protein resides in the endoplasmic reticulum membrane. The protein operates within glycolipid biosynthesis; glycosylphosphatidylinositol-anchor biosynthesis. Component of the GPI transamidase complex. Involved in transfer of GPI to proteins. The chain is GPI transamidase component PIG-S homolog (gpi17) from Schizosaccharomyces pombe (strain 972 / ATCC 24843) (Fission yeast).